Reading from the N-terminus, the 593-residue chain is Transcription factor ATEG_07667 (593 aa).

Residues 18-47 (CTQCYKAKCRCVRTPSGDTCERCIRLKKRC) constitute a DNA-binding region (zn(2)-C6 fungal-type).

The protein localises to the nucleus. In terms of biological role, transcriptional regulator that regulates both the azasperpyranone A biosynthesis clusters A and B. Specifically up-regulates the expression of the cluster A and B specific transcription factors ATEG_03638 and ATEG_07666, which in turn activate the expression of their respective clusters. This chain is Transcription factor ATEG_07667, found in Aspergillus terreus (strain NIH 2624 / FGSC A1156).